The following is a 695-amino-acid chain: Protein-glutamine gamma-glutamyltransferase 2 (695 aa).

Residues C272, H332, and D355 contribute to the active site. Positions 395, 397, 434, 444, and 449 each coordinate Ca(2+). GTP is bound by residues 476–482 and 578–581; these read SIKHAQP and ANIP.

The protein belongs to the transglutaminase superfamily. Transglutaminase family. As to quaternary structure, monomer. The cofactor is Ca(2+).

The protein localises to the cytoplasm. It localises to the cytosol. It is found in the nucleus. Its subcellular location is the chromosome. The protein resides in the secreted. The protein localises to the extracellular space. It localises to the extracellular matrix. It is found in the cell membrane. Its subcellular location is the mitochondrion. It catalyses the reaction L-glutaminyl-[protein] + L-lysyl-[protein] = [protein]-L-lysyl-N(6)-5-L-glutamyl-[protein] + NH4(+). The enzyme catalyses L-glutaminyl-[protein] + serotonin = 5-serotonyl-L-glutamyl-[protein] + NH4(+). It carries out the reaction L-glutaminyl-[protein] + dopamine = 5-dopaminyl-L-glutamyl-[protein] + NH4(+). The catalysed reaction is L-glutaminyl-[protein] + histamine = 5-histaminyl-L-glutamyl-[protein] + NH4(+). It catalyses the reaction L-glutaminyl-[protein] + (R)-noradrenaline = 5-(R)-noradrenalinyl-L-glutamyl-[protein] + NH4(+). The enzyme catalyses L-glutaminyl-[protein] + H2O = L-glutamyl-[protein] + NH4(+). Its activity is regulated as follows. Acyltransferase activity is regulated by the binding of GTP and Ca(2+): inactivated by GTP, which stabilizes its closed structure, thereby obstructing the accessibility of substrates to the active sites. In contrast, Ca(2+) acts as a cofactor by inducing conformational change to the active open form. In absence of Ca(2+), Mg(2+) may bind Ca(2+)-binding sites, promoting GTP-binding and subsequent inhibition of the acyltransferase activity. In terms of biological role, calcium-dependent acyltransferase that catalyzes the formation of covalent bonds between peptide-bound glutamine and various primary amines, such as gamma-amino group of peptide-bound lysine, or mono- and polyamines, thereby producing cross-linked or aminated proteins, respectively. Involved in many biological processes, such as bone development, angiogenesis, wound healing, cellular differentiation, chromatin modification and apoptosis. Acts as a protein-glutamine gamma-glutamyltransferase by mediating the cross-linking of proteins: under physiological conditions, the protein cross-linking activity is inhibited by GTP; inhibition is relieved by Ca(2+) in response to various stresses. When secreted, catalyzes cross-linking of proteins of the extracellular matrix, resulting in the formation of scaffolds. Plays a key role during apoptosis, both by (1) promoting the cross-linking of cytoskeletal proteins resulting in condensation of the cytoplasm, and by (2) mediating cross-linking proteins of the extracellular matrix, resulting in the irreversible formation of scaffolds that stabilize the integrity of the dying cells before their clearance by phagocytosis, thereby preventing the leakage of harmful intracellular components. In addition to protein cross-linking, can use different monoamine substrates to catalyze a vast array of protein post-translational modifications: mediates aminylation of serotonin, dopamine, noradrenaline or histamine into glutamine residues of target proteins to generate protein serotonylation, dopaminylation, noradrenalinylation or histaminylation, respectively. Mediates protein serotonylation of small GTPases during activation and aggregation of platelets, leading to constitutive activation of these GTPases. Plays a key role in chromatin organization by mediating serotonylation and dopaminylation of histone H3. Catalyzes serotonylation of 'Gln-5' of histone H3 (H3Q5ser) during serotonergic neuron differentiation, thereby facilitating transcription. Acts as a mediator of neurotransmission-independent role of nuclear dopamine in ventral tegmental area (VTA) neurons: catalyzes dopaminylation of 'Gln-5' of histone H3 (H3Q5dop), thereby regulating relapse-related transcriptional plasticity in the reward system. Also acts as a protein deamidase by mediating the side chain deamidation of specific glutamine residues of proteins to glutamate. May also act as an isopeptidase cleaving the previously formed cross-links. Also able to participate in signaling pathways independently of its acyltransferase activity: acts as a signal transducer in alpha-1 adrenergic receptor-mediated stimulation of phospholipase C-delta (PLCD) activity and is required for coupling alpha-1 adrenergic agonists to the stimulation of phosphoinositide lipid metabolism. This chain is Protein-glutamine gamma-glutamyltransferase 2, found in Pagrus major (Red sea bream).